Reading from the N-terminus, the 521-residue chain is Sphingolipid C9-methyltransferase 2 (521 aa).

The next 2 membrane-spanning stretches (helical) occupy residues 60-80 (VLIS…GGGF) and 85-105 (FFAI…ISAI). S-adenosyl-L-methionine-binding positions include 225 to 226 (YT), 262 to 270 (MLDIGCGWG), 288 to 293 (TLGRNQ), and 318 to 319 (YR).

It belongs to the CFA/CMAS family.

It is found in the membrane. It catalyses the reaction a (4E,8E)-4-sphinga-4,8-dienine ceramide + S-adenosyl-L-methionine = a 9-methyl-(4E,8E)-sphinga-4,8-dienine ceramide + S-adenosyl-L-homocysteine + H(+). Its pathway is lipid metabolism; sphingolipid metabolism. In terms of biological role, catalyzes methylation of the sphingoid base component of glucosylceramides (GluCers) at the C9-position. Sphingolipid C9-methylation requires 4,8-desaturated ceramides as substrates. Glucosylceramides play important roles in growth, differentiation and pathogenicity. The methyl group at the C9-position distinguishes fungal glucosylceramides from those of plants and animals and may thus play a role in host-pathogen interactions enabling the host to recognize the fungal attack and initiate specific defense responses. However, C-9 methylation of GlcCers is not essential for the sensitivity of F.graminearum to plant defensins MsDef1 and RsAFP2. This Gibberella zeae (strain ATCC MYA-4620 / CBS 123657 / FGSC 9075 / NRRL 31084 / PH-1) (Wheat head blight fungus) protein is Sphingolipid C9-methyltransferase 2.